The chain runs to 226 residues: Ribonuclease 3 (226 aa).

The 123-residue stretch at 6–128 (INKLQRKLGY…LIGGVFLDSD (123 aa)) folds into the RNase III domain. Mg(2+) is bound at residue E41. Residue D45 is part of the active site. 2 residues coordinate Mg(2+): D114 and E117. The active site involves E117. Residues 155–225 (DPKTRLQEFL…AEQALIKLGI (71 aa)) form the DRBM domain.

This sequence belongs to the ribonuclease III family. As to quaternary structure, homodimer. Requires Mg(2+) as cofactor.

The protein resides in the cytoplasm. The catalysed reaction is Endonucleolytic cleavage to 5'-phosphomonoester.. Digests double-stranded RNA. Involved in the processing of primary rRNA transcript to yield the immediate precursors to the large and small rRNAs (23S and 16S). Processes some mRNAs, and tRNAs when they are encoded in the rRNA operon. Processes pre-crRNA and tracrRNA of type II CRISPR loci if present in the organism. The chain is Ribonuclease 3 from Erwinia tasmaniensis (strain DSM 17950 / CFBP 7177 / CIP 109463 / NCPPB 4357 / Et1/99).